A 177-amino-acid chain; its full sequence is Probable phospholipid hydroperoxide glutathione peroxidase (177 aa).

The active site involves Cys-42.

The protein belongs to the glutathione peroxidase family.

It is found in the cytoplasm. It carries out the reaction a hydroperoxy polyunsaturated fatty acid + 2 glutathione = a hydroxy polyunsaturated fatty acid + glutathione disulfide + H2O. Protects cells and enzymes from oxidative damage, by catalyzing the reduction of hydrogen peroxide, lipid peroxides and organic hydroperoxide, by glutathione. The polypeptide is Probable phospholipid hydroperoxide glutathione peroxidase (Encephalitozoon cuniculi (strain GB-M1) (Microsporidian parasite)).